A 628-amino-acid polypeptide reads, in one-letter code: tRNA uridine 5-carboxymethylaminomethyl modification enzyme MnmG (628 aa).

FAD contacts are provided by residues 11-16, V123, and S178; that span reads GAGHAG. Residue 271–285 participates in NAD(+) binding; that stretch reads GPRYCPSIETKIVTF. Position 368 (Q368) interacts with FAD.

The protein belongs to the MnmG family. Homodimer. Heterotetramer of two MnmE and two MnmG subunits. It depends on FAD as a cofactor.

It is found in the cytoplasm. In terms of biological role, NAD-binding protein involved in the addition of a carboxymethylaminomethyl (cmnm) group at the wobble position (U34) of certain tRNAs, forming tRNA-cmnm(5)s(2)U34. The sequence is that of tRNA uridine 5-carboxymethylaminomethyl modification enzyme MnmG from Bacteroides thetaiotaomicron (strain ATCC 29148 / DSM 2079 / JCM 5827 / CCUG 10774 / NCTC 10582 / VPI-5482 / E50).